A 1303-amino-acid chain; its full sequence is DNA-directed RNA polymerase subunit beta (1303 aa).

It belongs to the RNA polymerase beta chain family. As to quaternary structure, the RNAP catalytic core consists of 2 alpha, 1 beta, 1 beta' and 1 omega subunit. When a sigma factor is associated with the core the holoenzyme is formed, which can initiate transcription.

It catalyses the reaction RNA(n) + a ribonucleoside 5'-triphosphate = RNA(n+1) + diphosphate. Its function is as follows. DNA-dependent RNA polymerase catalyzes the transcription of DNA into RNA using the four ribonucleoside triphosphates as substrates. The polypeptide is DNA-directed RNA polymerase subunit beta (Chlorobaculum tepidum (strain ATCC 49652 / DSM 12025 / NBRC 103806 / TLS) (Chlorobium tepidum)).